The following is a 205-amino-acid chain: Dephospho-CoA kinase (205 aa).

The DPCK domain occupies 7 to 205 (IIGVTGRIAS…QGIINYERFE (199 aa)). Residue 15–20 (ASGKDT) participates in ATP binding.

The protein belongs to the CoaE family.

The protein localises to the cytoplasm. The enzyme catalyses 3'-dephospho-CoA + ATP = ADP + CoA + H(+). Its pathway is cofactor biosynthesis; coenzyme A biosynthesis; CoA from (R)-pantothenate: step 5/5. Functionally, catalyzes the phosphorylation of the 3'-hydroxyl group of dephosphocoenzyme A to form coenzyme A. The polypeptide is Dephospho-CoA kinase (Borreliella burgdorferi (strain ATCC 35210 / DSM 4680 / CIP 102532 / B31) (Borrelia burgdorferi)).